We begin with the raw amino-acid sequence, 211 residues long: FMN-dependent NADH:quinone oxidoreductase 3 (211 aa).

102–105 (MWNF) lines the FMN pocket.

Belongs to the azoreductase type 1 family. In terms of assembly, homodimer. Requires FMN as cofactor.

It carries out the reaction 2 a quinone + NADH + H(+) = 2 a 1,4-benzosemiquinone + NAD(+). The catalysed reaction is N,N-dimethyl-1,4-phenylenediamine + anthranilate + 2 NAD(+) = 2-(4-dimethylaminophenyl)diazenylbenzoate + 2 NADH + 2 H(+). Quinone reductase that provides resistance to thiol-specific stress caused by electrophilic quinones. Its function is as follows. Also exhibits azoreductase activity. Catalyzes the reductive cleavage of the azo bond in aromatic azo compounds to the corresponding amines. The polypeptide is FMN-dependent NADH:quinone oxidoreductase 3 (Bacillus cereus (strain ATCC 10987 / NRS 248)).